The sequence spans 739 residues: Lysyl oxidase homolog 3A (739 aa).

Residues 1–25 form the signal peptide; sequence MLRSELRDMVVAMVLWGILLPFCLS. SRCR domains are found at residues 38-139, 166-272, 293-393, and 403-511; these read FRLA…VICK, LRPL…VSCV, MRLK…VICN, and MRLT…VICS. Cystine bridges form between Cys-64-Cys-128, Cys-77-Cys-138, Cys-108-Cys-118, Cys-196-Cys-261, Cys-209-Cys-271, Cys-238-Cys-248, Cys-318-Cys-382, Cys-331-Cys-392, Cys-362-Cys-372, Cys-433-Cys-497, Cys-446-Cys-510, and Cys-479-Cys-489. Asn-256 carries an N-linked (GlcNAc...) asparagine glycan. Asn-468 carries N-linked (GlcNAc...) asparagine glycosylation. Residue Asn-611 is glycosylated (N-linked (GlcNAc...) asparagine). Residues 620–656 constitute a cross-link (lysine tyrosylquinone (Lys-Tyr)); it reads KASFCLEDTECHEGVSKRYECANFGEQGITVGCWDLY. Tyr-656 is subject to 2',4',5'-topaquinone.

The protein belongs to the lysyl oxidase family. It depends on Cu cation as a cofactor. Lysine tyrosylquinone residue serves as cofactor. Post-translationally, the lysine tyrosylquinone cross-link (LTQ) is generated by condensation of the epsilon-amino group of a lysine with a topaquinone produced by oxidation of tyrosine.

The protein localises to the secreted. Its subcellular location is the extracellular space. It is found in the cytoplasm. The protein resides in the nucleus. The catalysed reaction is L-lysyl-[protein] + O2 + H2O = (S)-2-amino-6-oxohexanoyl-[protein] + H2O2 + NH4(+). It carries out the reaction N(6)-acetyl-L-lysyl-[protein] + O2 + H2O = acetamide + (S)-2-amino-6-oxohexanoyl-[protein] + H2O2. Its function is as follows. Protein-lysine 6-oxidase that mediates the oxidation of peptidyl lysine residues to allysine in target proteins. Catalyzes the post-translational oxidative deamination of peptidyl lysine residues in precursors of elastin and different types of collagens, a prerequisite in the formation of cross-links between collagens and elastin. Can mediate oxidation of lysine residues that are acetylated. Also able to catalyze deacetylation of lysine residues. In Danio rerio (Zebrafish), this protein is Lysyl oxidase homolog 3A.